Reading from the N-terminus, the 309-residue chain is Olfactory receptor 14A16 (309 aa).

The Extracellular portion of the chain corresponds to 1–23 (MANLTIVTEFILMGFSTNKNMCI). Asn-3 is a glycosylation site (N-linked (GlcNAc...) asparagine). Residues 24–44 (LHSILFLLIYLCALMGNVLII) traverse the membrane as a helical segment. The Cytoplasmic segment spans residues 45-52 (MITTLDHH). Residues 53-73 (LHTPVYFFLKNLSFLDLCLIS) form a helical membrane-spanning segment. At 74–97 (VTAPKSIANSLIHNNSISFLGCVS) the chain is on the extracellular side. N-linked (GlcNAc...) asparagine glycosylation is present at Asn-87. Cysteines 95 and 187 form a disulfide. A helical membrane pass occupies residues 98 to 118 (QVFLLLSSASAELLLLTVMSF). Over 119–131 (DRYTAICHPLHYD) the chain is Cytoplasmic. The chain crosses the membrane as a helical span at residues 132–152 (VIMDRSTCVQRATVSWLYGGL). Topologically, residues 153 to 194 (IAVMHTAGTFSLSYCGSNMVHQFFCDIPQLLAISCSENLIRE) are extracellular. The chain crosses the membrane as a helical span at residues 195 to 215 (IALILINVVLDFCCFIVIIIT). The Cytoplasmic portion of the chain corresponds to 216 to 235 (YVHVFSTVKKIPSTEGQSKA). The chain crosses the membrane as a helical span at residues 236–255 (YSICLPHLLVVLFLSTGFIA). Topologically, residues 256 to 268 (YLKPASESPSILD) are extracellular. Residues 269–289 (AVISVFYTMLPPTFNPIIYSL) traverse the membrane as a helical segment. Topologically, residues 290 to 309 (RNKAIKVALGMLIKGKLTKK) are cytoplasmic.

Belongs to the G-protein coupled receptor 1 family.

It localises to the cell membrane. Functionally, odorant receptor. In Homo sapiens (Human), this protein is Olfactory receptor 14A16 (OR14A16).